The primary structure comprises 184 residues: Peptide methionine sulfoxide reductase (184 aa).

S58 is modified (phosphoserine).

This sequence belongs to the MsrA Met sulfoxide reductase family.

It catalyses the reaction L-methionyl-[protein] + [thioredoxin]-disulfide + H2O = L-methionyl-(S)-S-oxide-[protein] + [thioredoxin]-dithiol. It carries out the reaction [thioredoxin]-disulfide + L-methionine + H2O = L-methionine (S)-S-oxide + [thioredoxin]-dithiol. In terms of biological role, has an important function as a repair enzyme for proteins that have been inactivated by oxidation. Catalyzes the reversible oxidation-reduction of methionine sulfoxide in proteins to methionine. Also able to reduce dimethyl sulfoxide (DMSO) as well, with DMS as the product. This chain is Peptide methionine sulfoxide reductase (MXR1), found in Saccharomyces cerevisiae (strain ATCC 204508 / S288c) (Baker's yeast).